The chain runs to 90 residues: Defensin-like protein 178 (90 aa).

Positions 1-23 are cleaved as a signal peptide; it reads MAKATSSLVVPIIFLVIFALVEQ. 4 disulfides stabilise this stretch: Cys27-Cys66, Cys36-Cys55, Cys39-Cys60, and Cys43-Cys62.

It belongs to the DEFL family.

It is found in the secreted. The chain is Defensin-like protein 178 (LCR64) from Arabidopsis thaliana (Mouse-ear cress).